Consider the following 226-residue polypeptide: Uracil phosphoribosyltransferase (226 aa).

36–40 (KGLVK) is a binding site for GTP. 5-phospho-alpha-D-ribose 1-diphosphate is bound by residues Arg-86, Arg-111, and 145-153 (DPMLATGST). Residues Ile-211 and 216–218 (GDA) each bind uracil. Asp-217 is a binding site for 5-phospho-alpha-D-ribose 1-diphosphate.

Belongs to the UPRTase family. It depends on Mg(2+) as a cofactor.

It carries out the reaction UMP + diphosphate = 5-phospho-alpha-D-ribose 1-diphosphate + uracil. It functions in the pathway pyrimidine metabolism; UMP biosynthesis via salvage pathway; UMP from uracil: step 1/1. Allosterically activated by GTP. Its function is as follows. Catalyzes the conversion of uracil and 5-phospho-alpha-D-ribose 1-diphosphate (PRPP) to UMP and diphosphate. This chain is Uracil phosphoribosyltransferase, found in Haloquadratum walsbyi (strain DSM 16790 / HBSQ001).